A 350-amino-acid polypeptide reads, in one-letter code: tRNA uridine(34) hydroxylase (350 aa).

The Rhodanese domain occupies 146 to 240 (DDPEAVFVDM…YARRAREQGL (95 aa)). Cys200 (cysteine persulfide intermediate) is an active-site residue.

The protein belongs to the TrhO family.

The enzyme catalyses uridine(34) in tRNA + AH2 + O2 = 5-hydroxyuridine(34) in tRNA + A + H2O. Functionally, catalyzes oxygen-dependent 5-hydroxyuridine (ho5U) modification at position 34 in tRNAs. This chain is tRNA uridine(34) hydroxylase, found in Erwinia tasmaniensis (strain DSM 17950 / CFBP 7177 / CIP 109463 / NCPPB 4357 / Et1/99).